The chain runs to 527 residues: Ribonuclease Y 2 (527 aa).

The helical transmembrane segment at 2-22 threads the bilayer; it reads IAMIATAIIGIVAGGGLGWAL. The 94-residue stretch at 339–432 folds into the HD domain; it reads QYFHCGEVGW…VIAADAVSGA (94 aa).

This sequence belongs to the RNase Y family.

The protein resides in the cell membrane. Functionally, endoribonuclease that initiates mRNA decay. The polypeptide is Ribonuclease Y 2 (Bdellovibrio bacteriovorus (strain ATCC 15356 / DSM 50701 / NCIMB 9529 / HD100)).